We begin with the raw amino-acid sequence, 212 residues long: phospholipase A2 inhibitor and Ly6/PLAUR domain-containing protein (212 aa).

A signal peptide spans 1 to 24 (MILFRRHRTFLLAFTLLCTLLGLG). The 91-residue stretch at 27–117 (LTCEVCKGSG…NSGSVPPPLN (91 aa)) folds into the UPAR/Ly6 domain. 7 disulfides stabilise this stretch: cysteine 29/cysteine 53, cysteine 32/cysteine 39, cysteine 46/cysteine 74, cysteine 80/cysteine 101, cysteine 102/cysteine 107, cysteine 126/cysteine 152, and cysteine 145/cysteine 173.

Belongs to the CNF-like-inhibitor family.

Its subcellular location is the secreted. In Mus musculus (Mouse), this protein is phospholipase A2 inhibitor and Ly6/PLAUR domain-containing protein (Pinlyp).